A 650-amino-acid polypeptide reads, in one-letter code: DNA gyrase subunit B (650 aa).

A Toprim domain is found at 429–543 (NELFIVEGDS…AGYVYIAQPP (115 aa)). Glu435, Asp508, and Asp510 together coordinate Mg(2+).

It belongs to the type II topoisomerase GyrB family. In terms of assembly, heterotetramer, composed of two GyrA and two GyrB chains. In the heterotetramer, GyrA contains the active site tyrosine that forms a transient covalent intermediate with DNA, while GyrB binds cofactors and catalyzes ATP hydrolysis. Mg(2+) serves as cofactor. Requires Mn(2+) as cofactor. Ca(2+) is required as a cofactor.

Its subcellular location is the cytoplasm. The enzyme catalyses ATP-dependent breakage, passage and rejoining of double-stranded DNA.. A type II topoisomerase that negatively supercoils closed circular double-stranded (ds) DNA in an ATP-dependent manner to modulate DNA topology and maintain chromosomes in an underwound state. Negative supercoiling favors strand separation, and DNA replication, transcription, recombination and repair, all of which involve strand separation. Also able to catalyze the interconversion of other topological isomers of dsDNA rings, including catenanes and knotted rings. Type II topoisomerases break and join 2 DNA strands simultaneously in an ATP-dependent manner. This Streptococcus pyogenes serotype M3 (strain ATCC BAA-595 / MGAS315) protein is DNA gyrase subunit B.